A 748-amino-acid polypeptide reads, in one-letter code: LPS-assembly protein LptD (748 aa).

Residues 1–19 form the signal peptide; the sequence is MSKTWGILMLSVLSAPSLA.

It belongs to the LptD family. In terms of assembly, component of the lipopolysaccharide transport and assembly complex. Interacts with LptE and LptA.

It is found in the cell outer membrane. Functionally, together with LptE, is involved in the assembly of lipopolysaccharide (LPS) at the surface of the outer membrane. The chain is LPS-assembly protein LptD from Pseudoalteromonas translucida (strain TAC 125).